An 82-amino-acid polypeptide reads, in one-letter code: ATP synthase subunit c, chloroplastic (82 aa).

Helical transmembrane passes span 3 to 23 (PLIA…AAIG) and 57 to 77 (FAFM…LLFA).

The protein belongs to the ATPase C chain family. As to quaternary structure, F-type ATPases have 2 components, F(1) - the catalytic core - and F(0) - the membrane proton channel. F(1) has five subunits: alpha(3), beta(3), gamma(1), delta(1), epsilon(1). F(0) has four main subunits: a(1), b(1), b'(1) and c(10-14). The alpha and beta chains form an alternating ring which encloses part of the gamma chain. F(1) is attached to F(0) by a central stalk formed by the gamma and epsilon chains, while a peripheral stalk is formed by the delta, b and b' chains.

Its subcellular location is the plastid. It is found in the chloroplast thylakoid membrane. Functionally, f(1)F(0) ATP synthase produces ATP from ADP in the presence of a proton or sodium gradient. F-type ATPases consist of two structural domains, F(1) containing the extramembraneous catalytic core and F(0) containing the membrane proton channel, linked together by a central stalk and a peripheral stalk. During catalysis, ATP synthesis in the catalytic domain of F(1) is coupled via a rotary mechanism of the central stalk subunits to proton translocation. Its function is as follows. Key component of the F(0) channel; it plays a direct role in translocation across the membrane. A homomeric c-ring of between 10-14 subunits forms the central stalk rotor element with the F(1) delta and epsilon subunits. This is ATP synthase subunit c, chloroplastic from Oltmannsiellopsis viridis (Marine flagellate).